The following is a 106-amino-acid chain: uncharacterized protein (106 aa).

Belongs to the HesB/IscA family.

This is an uncharacterized protein from Bradyrhizobium diazoefficiens (strain JCM 10833 / BCRC 13528 / IAM 13628 / NBRC 14792 / USDA 110).